Reading from the N-terminus, the 138-residue chain is Putative membrane protein ORF6 (138 aa).

The next 2 helical transmembrane spans lie at 4–20 (LTIIFLLSGLTAYHAVL) and 37–53 (VVVLVMIGALLTLLMTI).

The protein localises to the membrane. In Ictalurid herpesvirus 1 (strain Auburn) (IcHV-1), this protein is Putative membrane protein ORF6 (ORF6).